A 345-amino-acid chain; its full sequence is Platelet-derived growth factor C (345 aa).

An N-terminal signal peptide occupies residues 1–22 (MLLLGLLLLTSALAGQRTGTRA). Residues 24–33 (SNLSSKLQLS) show a composition bias toward polar residues. Residues 24–45 (SNLSSKLQLSSDKEQNGVQDPR) are disordered. Residue Asn-25 is glycosylated (N-linked (GlcNAc...) asparagine). A compositionally biased stretch (basic and acidic residues) spans 34 to 45 (SDKEQNGVQDPR). Residues 46-163 (HERVVTISGN…PGFCIHYSII (118 aa)) form the CUB domain. The N-linked (GlcNAc...) asparagine glycan is linked to Asn-55. 4 disulfide bridges follow: Cys-104–Cys-124, Cys-250–Cys-294, Cys-280–Cys-335, and Cys-287–Cys-337.

The protein belongs to the PDGF/VEGF growth factor family. Homodimer; disulfide-linked. Interacts with PDGFRA homodimers, and with heterodimers formed by PDGFRA and PDGFRB. Interacts (via CUB domain) with PLAT (via kringle domain). In terms of processing, proteolytic removal of the N-terminal CUB domain releasing the core domain is necessary for unmasking the receptor-binding epitopes of the core domain. Cleavage after basic residues in the hinge region (region connecting the CUB and growth factor domains) gives rise to the receptor-binding form. Cleaved by PLAT and PLG. Sumoylated with SUMO1. Post-translationally, N-glycosylated. Highly expressed in the kidney and adrenal gland. In the kidney, it is expressed in arteriolar smooth muscle cells and in epithelial cells of individual segments (at protein level).

The protein localises to the cytoplasm. It is found in the cytosol. The protein resides in the secreted. It localises to the nucleus. Its subcellular location is the cytoplasmic granule. The protein localises to the cell membrane. Growth factor that plays an essential role in the regulation of embryonic development, cell proliferation, cell migration, survival and chemotaxis. Potent mitogen and chemoattractant for cells of mesenchymal origin. Required for normal skeleton formation during embryonic development, especially for normal development of the craniofacial skeleton and for normal development of the palate. Required for normal skin morphogenesis during embryonic development. Plays an important role in wound healing, where it appears to be involved in three stages: inflammation, proliferation and remodeling. Plays an important role in angiogenesis and blood vessel development. Involved in fibrotic processes, in which transformation of interstitial fibroblasts into myofibroblasts plus collagen deposition occurs. The CUB domain has mitogenic activity in coronary artery smooth muscle cells, suggesting a role beyond the maintenance of the latency of the PDGF domain. In the nucleus, PDGFC seems to have additional function. The polypeptide is Platelet-derived growth factor C (Pdgfc) (Rattus norvegicus (Rat)).